A 755-amino-acid chain; its full sequence is Lysosome membrane protein 2-B (755 aa).

The Cytoplasmic portion of the chain corresponds to 1-6 (MKHIGR). A helical membrane pass occupies residues 7–27 (IVSFPIGLVLIAVGIIIFVVV). Residues Asn28, Asn76, Asn379, Asn465, Asn497, Asn588, Asn607, and Asn680 are each glycosylated (N-linked (GlcNAc...) asparagine). Over 28 to 727 (NRTIKDEFKK…AYKVDSFRYA (700 aa)) the chain is Lumenal. The chain crosses the membrane as a helical span at residues 728–748 (ITVILIVVGGFLSLISGGLFV). The Cytoplasmic segment spans residues 749-755 (LDKIIDL). The short motif at 752–753 (II) is the Di-leucine motif element.

This sequence belongs to the CD36 family. In terms of processing, heavily glycosylated.

The protein localises to the lysosome membrane. Its function is as follows. May act as a lysosomal receptor. May be involved in macropinocytosis and fluid phase exocytosis. The sequence is that of Lysosome membrane protein 2-B (lmpB) from Dictyostelium discoideum (Social amoeba).